Consider the following 133-residue polypeptide: MQRVTITLDDDLLETLDSLSQRRGYNNRSEAIRDILRSALAQEATQQHGTQGFAVLSYVYEHEKRDLASRIVSTQHHHHDLSVATLHVHINHDDCLEIAVLKGDMGDVQHFADDVIAQRGVRHGHLQCLPKED.

Ni(2+)-binding residues include histidine 76, histidine 87, histidine 89, and cysteine 95.

The protein belongs to the transcriptional regulatory CopG/NikR family. In terms of assembly, homotetramer. It depends on Ni(2+) as a cofactor.

Transcriptional repressor of the nikABCDE operon. Is active in the presence of excessive concentrations of intracellular nickel. This Shigella dysenteriae serotype 1 (strain Sd197) protein is Nickel-responsive regulator.